A 196-amino-acid chain; its full sequence is Xanthine phosphoribosyltransferase (196 aa).

Positions 20 and 27 each coordinate xanthine. Position 128-132 (128-132 (ATGAA)) interacts with 5-phospho-alpha-D-ribose 1-diphosphate. Lys156 serves as a coordination point for xanthine.

Belongs to the purine/pyrimidine phosphoribosyltransferase family. Xpt subfamily. Homodimer.

It localises to the cytoplasm. It catalyses the reaction XMP + diphosphate = xanthine + 5-phospho-alpha-D-ribose 1-diphosphate. Its pathway is purine metabolism; XMP biosynthesis via salvage pathway; XMP from xanthine: step 1/1. Functionally, converts the preformed base xanthine, a product of nucleic acid breakdown, to xanthosine 5'-monophosphate (XMP), so it can be reused for RNA or DNA synthesis. The chain is Xanthine phosphoribosyltransferase from Brevibacillus brevis (strain 47 / JCM 6285 / NBRC 100599).